Reading from the N-terminus, the 36-residue chain is Photosystem I reaction center subunit VIII (36 aa).

Residues 9-29 (ILVPLVGLVFPAVTMASLFLY) form a helical membrane-spanning segment.

This sequence belongs to the PsaI family.

The protein localises to the plastid. Its subcellular location is the chloroplast thylakoid membrane. May help in the organization of the PsaL subunit. The sequence is that of Photosystem I reaction center subunit VIII from Staurastrum punctulatum (Green alga).